We begin with the raw amino-acid sequence, 435 residues long: Glutamyl-tRNA reductase (435 aa).

Substrate is bound by residues Thr49–Arg52, Ser109, Glu114–Gln116, and Gln120. Cys50 functions as the Nucleophile in the catalytic mechanism. Gly189–Ser194 is an NADP(+) binding site.

Belongs to the glutamyl-tRNA reductase family. Homodimer.

It catalyses the reaction (S)-4-amino-5-oxopentanoate + tRNA(Glu) + NADP(+) = L-glutamyl-tRNA(Glu) + NADPH + H(+). It participates in porphyrin-containing compound metabolism; protoporphyrin-IX biosynthesis; 5-aminolevulinate from L-glutamyl-tRNA(Glu): step 1/2. In terms of biological role, catalyzes the NADPH-dependent reduction of glutamyl-tRNA(Glu) to glutamate 1-semialdehyde (GSA). In Listeria monocytogenes serotype 4b (strain F2365), this protein is Glutamyl-tRNA reductase.